The primary structure comprises 306 residues: tRNA pseudouridine synthase B (306 aa).

Aspartate 48 (nucleophile) is an active-site residue.

This sequence belongs to the pseudouridine synthase TruB family. Type 1 subfamily.

The enzyme catalyses uridine(55) in tRNA = pseudouridine(55) in tRNA. Functionally, responsible for synthesis of pseudouridine from uracil-55 in the psi GC loop of transfer RNAs. In Ectopseudomonas mendocina (strain ymp) (Pseudomonas mendocina), this protein is tRNA pseudouridine synthase B.